We begin with the raw amino-acid sequence, 237 residues long: Phosphoribosylaminoimidazole-succinocarboxamide synthase (237 aa).

This sequence belongs to the SAICAR synthetase family.

It catalyses the reaction 5-amino-1-(5-phospho-D-ribosyl)imidazole-4-carboxylate + L-aspartate + ATP = (2S)-2-[5-amino-1-(5-phospho-beta-D-ribosyl)imidazole-4-carboxamido]succinate + ADP + phosphate + 2 H(+). It functions in the pathway purine metabolism; IMP biosynthesis via de novo pathway; 5-amino-1-(5-phospho-D-ribosyl)imidazole-4-carboxamide from 5-amino-1-(5-phospho-D-ribosyl)imidazole-4-carboxylate: step 1/2. The polypeptide is Phosphoribosylaminoimidazole-succinocarboxamide synthase (Photorhabdus laumondii subsp. laumondii (strain DSM 15139 / CIP 105565 / TT01) (Photorhabdus luminescens subsp. laumondii)).